A 167-amino-acid polypeptide reads, in one-letter code: Small ribosomal subunit protein uS5 (167 aa).

The 64-residue stretch at 12–75 (LQEKLIAVNR…EKARRNMVTI (64 aa)) folds into the S5 DRBM domain.

Belongs to the universal ribosomal protein uS5 family. Part of the 30S ribosomal subunit. Contacts proteins S4 and S8.

With S4 and S12 plays an important role in translational accuracy. Functionally, located at the back of the 30S subunit body where it stabilizes the conformation of the head with respect to the body. This chain is Small ribosomal subunit protein uS5, found in Vibrio vulnificus (strain CMCP6).